The sequence spans 168 residues: Mesencephalic astrocyte-derived neurotrophic factor homolog (168 aa).

The signal sequence occupies residues 1-17; the sequence is MSRLVLLISLVIVVASA. 4 cysteine pairs are disulfide-bonded: cysteine 22–cysteine 109, cysteine 25–cysteine 97, cysteine 55–cysteine 66, and cysteine 143–cysteine 146.

Belongs to the ARMET family. In terms of tissue distribution, expressed in the intestine, spermatheca and nervous system. Expressed in the hypoderm. Expressed in structures of the excretory system. Not expressed in the male gonad.

The protein resides in the secreted. It is found in the endoplasmic reticulum lumen. Its function is as follows. Inhibits endoplasmic reticulum (ER) stress response. Retained in the ER under normal conditions and is up-regulated and secreted by the ER in response to ER stress and hypoxia. Following secretion by the ER, directly binds to 3-O-sulfogalactosylceramide, a lipid sulfatide in the outer cell membrane of target cells. Sulfatide binding promotes its cellular uptake by endocytosis, and is required for its role in alleviating ER stress under ER stress conditions. Has a neuroprotective role, ensuring survival of dopaminergic neurons during normal growth. The protein is Mesencephalic astrocyte-derived neurotrophic factor homolog of Caenorhabditis elegans.